The chain runs to 364 residues: FMNH(2)-dependent dimethylsulfone monooxygenase (364 aa).

This sequence belongs to the SsuD family.

It catalyses the reaction dimethyl sulfone + FMNH2 + O2 = methanesulfinate + FMN + formaldehyde + H2O + 2 H(+). Its function is as follows. Involved in the dimethyl sulfide degradation pathway. Catalyzes the oxidation of dimethylsulfone (DMSO2) to yield methanesulfinate, which is oxidized spontaneously to methanesulfonate in the presence of dioxygen and FMNH(2). The protein is FMNH(2)-dependent dimethylsulfone monooxygenase of Pseudomonas fluorescens (strain Pf0-1).